The following is a 2173-amino-acid chain: Mediator of RNA polymerase II transcription subunit 12 (2173 aa).

Disordered stretches follow at residues Met-1–Asp-34, Gly-318–Asn-345, Ala-630–Asp-718, Lys-784–Ala-804, Met-1380–Ser-1404, Glu-1443–Ser-1467, Glu-1737–Glu-1780, and Gln-2020–Gln-2068. The segment covering Gln-702–Met-717 has biased composition (basic and acidic residues). A compositionally biased stretch (low complexity) spans Gly-1389–Ser-1404. 2 stretches are compositionally biased toward basic and acidic residues: residues Glu-1443–Lys-1462 and Glu-1747–Lys-1759. Positions Gln-2034–Gln-2057 are enriched in low complexity.

Belongs to the Mediator complex subunit 12 family. As to quaternary structure, component of the Mediator complex.

Its subcellular location is the nucleus. Functionally, component of the Mediator complex, a coactivator involved in regulated gene transcription of nearly all RNA polymerase II-dependent genes. Mediator functions as a bridge to convey information from gene-specific regulatory proteins to the basal RNA polymerase II transcription machinery. Mediator is recruited to promoters by direct interactions with regulatory proteins and serves as a scaffold for the assembly of a functional preinitiation complex with RNA polymerase II and the general transcription factors. Required for development of the body axis, brain, ear, kidney, forelimb and neural crest and for pigmentation. Acts as a coactivator for sox9a and/or sox9b promoting the expression of several neuronal determination genes. This Danio rerio (Zebrafish) protein is Mediator of RNA polymerase II transcription subunit 12 (med12).